Reading from the N-terminus, the 393-residue chain is Glycocyamine kinase (393 aa).

The region spanning 7–94 (REKFAKENFP…FDRVIEEIHH (88 aa)) is the Phosphagen kinase N-terminal domain. In terms of domain architecture, Phosphagen kinase C-terminal spans 120-362 (YVKSCRIRCG…NVLIEADKRL (243 aa)). Residues 123-127 (SCRIR), H186, R231, 287-291 (RASVH), 315-320 (RGTGGE), and D330 contribute to the ATP site. The segment at 367–393 (PIDDLTPRLNSSTGTSISATASRHMTL) is disordered. The span at 377-393 (SSTGTSISATASRHMTL) shows a compositional bias: low complexity.

This sequence belongs to the ATP:guanido phosphotransferase family. Monomer.

It catalyses the reaction guanidinoacetate + ATP = phosphoguanidinoacetate + ADP + H(+). This Hediste diversicolor (Sandworm) protein is Glycocyamine kinase.